Reading from the N-terminus, the 485-residue chain is Amino acid permease 1 (485 aa).

Residues Met-1–Glu-15 are compositionally biased toward polar residues. The segment at Met-1–Glu-35 is disordered. The Cytoplasmic segment spans residues Met-1 to Thr-40. The next 2 helical transmembrane spans lie at Trp-41–Ala-61 and Trp-62–Ile-82. Topologically, residues Thr-83 to Tyr-129 are cytoplasmic. The chain crosses the membrane as a helical span at residues Gly-130–Val-150. Over Gly-151–Thr-166 the chain is Extracellular. The helical transmembrane segment at Ile-167–Pro-187 threads the bilayer. Topologically, residues Asn-188–Phe-194 are cytoplasmic. A helical transmembrane segment spans residues Leu-195–Ile-215. Over Ala-216 to Arg-245 the chain is Extracellular. A helical transmembrane segment spans residues Ser-246 to Ile-266. Topologically, residues Gln-267 to Leu-285 are cytoplasmic. Residues Val-286–Phe-306 form a helical membrane-spanning segment. The Extracellular segment spans residues Gly-307–Phe-318. The helical transmembrane segment at Gly-319–Ile-339 threads the bilayer. Over Gly-340–Tyr-394 the chain is Cytoplasmic. A run of 2 helical transmembrane segments spans residues Val-395–Ile-415 and Gly-416–Thr-436. Residues Lys-437–Thr-450 are Cytoplasmic-facing. A helical transmembrane segment spans residues Met-451–Ile-471. The Extracellular portion of the chain corresponds to Ser-472–Glu-485.

This sequence belongs to the amino acid/polyamine transporter 2 family. Amino acid/auxin permease (AAAP) (TC 2.A.18.2) subfamily. In terms of tissue distribution, highly expressed in developing pods. Found in the endosperm and in the storage parenchyma and the outer epidermis cells of the developing embryo. Lower levels of expression in flowers, in the vascular system of the cotyledon and in the root epidermal cells, including root hairs and throughout the root tip.

It is found in the cell membrane. With respect to regulation, inhibited by carbonylcyanide m-chlorophenylhydrazone and diethylpyrocarbonate (DEPC). Amino acid-proton symporter. Stereospecific transporter with a broad specificity for histidine, glutamate and neutral amino acids. Reduced affinities for asparagine and valine. Involved in amino acid uptake from the apoplastic cavity into the embryo cells for storage protein accumulation and in root amino acid uptake. This Arabidopsis thaliana (Mouse-ear cress) protein is Amino acid permease 1 (AAP1).